The following is a 357-amino-acid chain: DnaJ homolog subfamily C member 25 (357 aa).

A helical transmembrane segment spans residues Trp19–Val39. Residues Asp48–Leu121 form the J domain. 2 consecutive transmembrane segments (helical) span residues Val147–Ser167 and Leu241–Cys261.

The protein belongs to the DNAJC25 family.

Its subcellular location is the membrane. The chain is DnaJ homolog subfamily C member 25 (Dnajc25) from Rattus norvegicus (Rat).